The primary structure comprises 175 residues: uncharacterized protein (175 aa).

The protein belongs to the asfivirus B175L family.

This is an uncharacterized protein from Ornithodoros (relapsing fever ticks).